The chain runs to 307 residues: Adenosylcobinamide-GDP ribazoletransferase (307 aa).

A run of 8 helical transmembrane segments spans residues 22–42 (PLFE…VPGA), 58–78 (PFVG…IGPI), 80–100 (GVIH…WELL), 137–157 (FGLA…ASLV), 161–181 (VWWM…VTAL), 212–232 (TAAL…LTSV), 248–268 (AWLG…AALF), and 283–303 (CIGA…AVVA).

This sequence belongs to the CobS family. It depends on Mg(2+) as a cofactor.

Its subcellular location is the cell membrane. It catalyses the reaction alpha-ribazole + adenosylcob(III)inamide-GDP = adenosylcob(III)alamin + GMP + H(+). The catalysed reaction is alpha-ribazole 5'-phosphate + adenosylcob(III)inamide-GDP = adenosylcob(III)alamin 5'-phosphate + GMP + H(+). It functions in the pathway cofactor biosynthesis; adenosylcobalamin biosynthesis; adenosylcobalamin from cob(II)yrinate a,c-diamide: step 7/7. Joins adenosylcobinamide-GDP and alpha-ribazole to generate adenosylcobalamin (Ado-cobalamin). Also synthesizes adenosylcobalamin 5'-phosphate from adenosylcobinamide-GDP and alpha-ribazole 5'-phosphate. The chain is Adenosylcobinamide-GDP ribazoletransferase from Corynebacterium glutamicum (strain ATCC 13032 / DSM 20300 / JCM 1318 / BCRC 11384 / CCUG 27702 / LMG 3730 / NBRC 12168 / NCIMB 10025 / NRRL B-2784 / 534).